The primary structure comprises 96 residues: MDGQPITGGVHPTENLNAEHHDFIKAALNETGTHAGRKYKVLRSSQQVVAGMKYTFYIVFEDDESGQEYKITAWSRPWLQDKGEALKLTFDKHEPK.

The region spanning 22–65 (DFIKAALNETGTHAGRKYKVLRSSQQVVAGMKYTFYIVFEDDES) is the Cystatin domain. Asn29 is a glycosylation site (N-linked (GlcNAc...) asparagine).

This sequence belongs to the cystatin family. As to quaternary structure, interacts with cathepsin L-like peptidase; the interaction results in inhibition of cathepsin L-like peptidase activity. In terms of tissue distribution, salivary gland. Midgut.

Functionally, cysteine proteinase inhibitor. Inhibits cathepsin L-like peptidase. Increases cell viability following apoptosis induction by staurosporine. Inhibits human cathepsin S (CTSS), human cathepsin L2 (CTSV), human cathepsin L (CTSL), human cathepsin B (CTSB) and papain. In terms of biological role, (Microbial infection) Modulates dengue virus type 2 replication in salivary glands. The protein is Cystatin of Aedes aegypti (Yellowfever mosquito).